Consider the following 173-residue polypeptide: Nascent polypeptide-associated complex subunit alpha (173 aa).

One can recognise an NAC-A/B domain in the interval 21 to 85; that stretch reads VVHAEKAQKL…VTVEDMAAQA (65 aa). The disordered stretch occupies residues 89–117; it reads NESQKQATETKEEAAITEESGDAQPADTA. The residue at position 122 (S122) is a Phosphoserine. The region spanning 134–171 is the UBA domain; the sequence is VDAKDIELVMAQANVSRAKAVTALKENNSDVVNAIMSL.

This sequence belongs to the NAC-alpha family. In terms of assembly, part of the nascent polypeptide-associated complex (NAC), consisting of ucp15 and btf3. NAC associates with ribosomes via btf3.

The protein localises to the cytoplasm. The protein resides in the nucleus. Component of the nascent polypeptide-associated complex (NAC), a dynamic component of the ribosomal exit tunnel, protecting the emerging polypeptides from interaction with other cytoplasmic proteins to ensure appropriate nascent protein targeting. The NAC complex also promotes mitochondrial protein import by enhancing productive ribosome interactions with the outer mitochondrial membrane and blocks the inappropriate interaction of ribosomes translating non-secretory nascent polypeptides with translocation sites in the membrane of the endoplasmic reticulum. Ucp15 may also be involved in transcription regulation. This Schizosaccharomyces pombe (strain 972 / ATCC 24843) (Fission yeast) protein is Nascent polypeptide-associated complex subunit alpha (egd2).